The chain runs to 340 residues: 2-deoxy-scyllo-inosamine dehydrogenase (340 aa).

7 residues coordinate Zn(2+): C37, H59, C89, C92, C95, C103, and E144.

The protein belongs to the zinc-containing alcohol dehydrogenase family. DOIA dehydrogenase subfamily. Zn(2+) serves as cofactor.

The catalysed reaction is 2-deoxy-scyllo-inosamine + NADP(+) = 3-amino-2,3-dideoxy-scyllo-inosose + NADPH + H(+). It carries out the reaction 2-deoxy-scyllo-inosamine + NAD(+) = 3-amino-2,3-dideoxy-scyllo-inosose + NADH + H(+). It participates in metabolic intermediate biosynthesis; 2-deoxystreptamine biosynthesis; 2-deoxystreptamine from D-glucose 6-phosphate: step 3/4. The protein operates within antibiotic biosynthesis; neomycin biosynthesis. In terms of biological role, catalyzes the oxidation of 2-deoxy-scyllo-inosamine (DOIA) with NAD(+) or NADP(+), forming 3-amino-2,3-dideoxy-scyllo-inosose (amino-DOI). In Streptomyces fradiae (Streptomyces roseoflavus), this protein is 2-deoxy-scyllo-inosamine dehydrogenase (neoA).